The primary structure comprises 176 residues: Urease accessory protein UreE (176 aa).

Belongs to the UreE family.

Its subcellular location is the cytoplasm. Involved in urease metallocenter assembly. Binds nickel. Probably functions as a nickel donor during metallocenter assembly. In Helicobacter bizzozeronii, this protein is Urease accessory protein UreE.